Reading from the N-terminus, the 862-residue chain is Kinesin-like protein KIN-7J (862 aa).

Residues 9-331 form the Kinesin motor domain; it reads RIVVSVRLRP…LLFANCAKDV (323 aa). An ATP-binding site is contributed by 95–102; it reads GQTSSGKT. A coiled-coil region spans residues 340 to 415; the sequence is VMSDKALVKH…NFRKVASDGD (76 aa). Basic and acidic residues-rich tracts occupy residues 475–499 and 518–531; these read EEHEAQRVAHRAESEPPEEHCKEVQ and PEKKTHTDDQKHSE. 2 disordered regions span residues 475–532 and 596–643; these read EEHE…HSES and DDSA…STCN. Polar residues predominate over residues 598–610; sequence SASTTPSSETFRY. The segment covering 613 to 629 has biased composition (basic and acidic residues); sequence RRPEKVRKSLSPDEIAD.

Belongs to the TRAFAC class myosin-kinesin ATPase superfamily. Kinesin family. KIN-7 subfamily.

In Oryza sativa subsp. japonica (Rice), this protein is Kinesin-like protein KIN-7J.